Here is a 394-residue protein sequence, read N- to C-terminus: Elongation factor Tu (394 aa).

The 195-residue stretch at 10 to 204 folds into the tr-type G domain; sequence KPHLNVGTIG…ALDTYIPLPE (195 aa). Residues 19 to 26 form a G1 region; sequence GHVDHGKT. Residue 19–26 coordinates GTP; it reads GHVDHGKT. Thr26 lines the Mg(2+) pocket. The interval 60–64 is G2; sequence GITIN. The segment at 81–84 is G3; it reads DCPG. GTP contacts are provided by residues 81–85 and 136–139; these read DCPGH and NKCD. Residues 136 to 139 form a G4 region; that stretch reads NKCD. A G5 region spans residues 174 to 176; the sequence is SAL.

It belongs to the TRAFAC class translation factor GTPase superfamily. Classic translation factor GTPase family. EF-Tu/EF-1A subfamily. As to quaternary structure, monomer.

The protein resides in the cytoplasm. It carries out the reaction GTP + H2O = GDP + phosphate + H(+). Functionally, GTP hydrolase that promotes the GTP-dependent binding of aminoacyl-tRNA to the A-site of ribosomes during protein biosynthesis. The polypeptide is Elongation factor Tu (Psychromonas ingrahamii (strain DSM 17664 / CCUG 51855 / 37)).